A 688-amino-acid polypeptide reads, in one-letter code: Probable glucan endo-1,3-beta-glucosidase btgC (688 aa).

Disordered regions lie at residues 1–49, 61–91, and 169–194; these read MSGP…MNGQ, DGRQGWGRSPEPSPSLLTGSSATPGMDNLGP, and QLTPGQSVSHLSSTNPSQRNLYDIPY. The Cytoplasmic portion of the chain corresponds to 1-307; it reads MSGPNRTYSF…PKPGGGNKKR (307 aa). The span at 175-188 shows a compositional bias: polar residues; that stretch reads SVSHLSSTNPSQRN. A helical; Signal-anchor for type II membrane protein membrane pass occupies residues 308 to 328; the sequence is GWIVGAILAFIIIGAIVGGAV. Over 329–688 the chain is Extracellular; it reads GGTIGHRGNE…IPDCGGKTAT (360 aa). Residues 334 to 363 are disordered; it reads HRGNEEPSSASSASSSSTQTATEDTSVNGD. Low complexity predominate over residues 341-355; it reads SSASSASSSSTQTAT. N-linked (GlcNAc...) asparagine glycosylation is found at Asn-408, Asn-431, and Asn-459. Glu-491 functions as the Proton donor in the catalytic mechanism. Glu-590 (nucleophile) is an active-site residue. 2 N-linked (GlcNAc...) asparagine glycosylation sites follow: Asn-609 and Asn-635.

This sequence belongs to the glycosyl hydrolase 17 family.

It localises to the cell membrane. The catalysed reaction is Hydrolysis of (1-&gt;3)-beta-D-glucosidic linkages in (1-&gt;3)-beta-D-glucans.. Functionally, glucanases play a role in cell expansion during growth, in cell-cell fusion during mating, and in spore release during sporulation. This enzyme may be involved in beta-glucan degradation. Active on laminarin and lichenan. The polypeptide is Probable glucan endo-1,3-beta-glucosidase btgC (btgC) (Aspergillus fumigatus (strain CBS 144.89 / FGSC A1163 / CEA10) (Neosartorya fumigata)).